The primary structure comprises 542 residues: T-complex protein 1 subunit delta (542 aa).

Residues 1–16 (MPENVAPRTGPPAGAA) show a composition bias toward low complexity. Residues 1 to 31 (MPENVAPRTGPPAGAAGAAGGRGKSAYQDRD) form a disordered region. At arginine 22 the chain carries Omega-N-methylarginine. Position 24 is an N6-acetyllysine (lysine 24). Phosphoserine is present on serine 39. Glycine 56 is a binding site for ADP. Residue glycine 56 coordinates ATP. Mg(2+) is bound at residue aspartate 107. The ADP site is built by glycine 108, threonine 109, threonine 110, serine 111, asparagine 175, serine 176, and lysine 177. Residues glycine 108 and threonine 109 each coordinate ATP. Lysine 177 is a binding site for ATP. Serine 187 and serine 205 each carry phosphoserine. Residues lysine 291, lysine 305, lysine 322, and lysine 329 each carry the N6-acetyllysine modification. Glycine 428 serves as a coordination point for ADP. Residue serine 447 is modified to Phosphoserine. ADP is bound at residue glutamine 513.

Belongs to the TCP-1 chaperonin family. As to quaternary structure, component of the chaperonin-containing T-complex (TRiC), a hexadecamer composed of two identical back-to-back stacked rings enclosing a protein folding chamber. Each ring is made up of eight different subunits: TCP1/CCT1, CCT2, CCT3, CCT4, CCT5, CCT6A/CCT6, CCT7, CCT8. Interacts with PACRG. Interacts with DNAAF4. Interacts with DLEC1.

The protein localises to the cytoplasm. The protein resides in the melanosome. It is found in the cytoskeleton. Its subcellular location is the microtubule organizing center. It localises to the centrosome. The protein localises to the cilium basal body. It carries out the reaction ATP + H2O = ADP + phosphate + H(+). Functionally, component of the chaperonin-containing T-complex (TRiC), a molecular chaperone complex that assists the folding of actin, tubulin and other proteins upon ATP hydrolysis. The TRiC complex mediates the folding of WRAP53/TCAB1, thereby regulating telomere maintenance. As part of the TRiC complex may play a role in the assembly of BBSome, a complex involved in ciliogenesis regulating transports vesicles to the cilia. In Bos taurus (Bovine), this protein is T-complex protein 1 subunit delta (CCT4).